A 321-amino-acid chain; its full sequence is uncharacterized protein (321 aa).

A disordered region spans residues 280–306 (NSDHINNENNTNSNNDDNSNNSNNNNE). Low complexity predominate over residues 286-306 (NENNTNSNNDDNSNNSNNNNE).

This is an uncharacterized protein from Dictyostelium discoideum (Social amoeba).